The sequence spans 123 residues: Glycine cleavage system H protein (123 aa).

Residues 23 to 104 (HWLAGITDHA…PYDAWIFSFE (82 aa)) form the Lipoyl-binding domain. The residue at position 64 (K64) is an N6-lipoyllysine.

It belongs to the GcvH family. The glycine cleavage system is composed of four proteins: P, T, L and H. Requires (R)-lipoate as cofactor.

The glycine cleavage system catalyzes the degradation of glycine. The H protein shuttles the methylamine group of glycine from the P protein to the T protein. In Methylobacillus flagellatus (strain ATCC 51484 / DSM 6875 / VKM B-1610 / KT), this protein is Glycine cleavage system H protein.